Here is a 335-residue protein sequence, read N- to C-terminus: Beta-ketoacyl-[acyl-carrier-protein] synthase III (335 aa).

Catalysis depends on residues Cys117 and His258. Positions 259-263 are ACP-binding; that stretch reads QANQR. Asn288 is a catalytic residue.

It belongs to the thiolase-like superfamily. FabH family. In terms of assembly, homodimer.

The protein resides in the cytoplasm. The enzyme catalyses malonyl-[ACP] + acetyl-CoA + H(+) = 3-oxobutanoyl-[ACP] + CO2 + CoA. The protein operates within lipid metabolism; fatty acid biosynthesis. In terms of biological role, catalyzes the condensation reaction of fatty acid synthesis by the addition to an acyl acceptor of two carbons from malonyl-ACP. Catalyzes the first condensation reaction which initiates fatty acid synthesis and may therefore play a role in governing the total rate of fatty acid production. Possesses both acetoacetyl-ACP synthase and acetyl transacylase activities. Its substrate specificity determines the biosynthesis of branched-chain and/or straight-chain of fatty acids. The protein is Beta-ketoacyl-[acyl-carrier-protein] synthase III of Synechococcus elongatus (strain ATCC 33912 / PCC 7942 / FACHB-805) (Anacystis nidulans R2).